We begin with the raw amino-acid sequence, 210 residues long: 2-dehydro-3-deoxy-phosphogluconate aldolase (210 aa).

The Proton acceptor role is filled by Glu-41. 3 residues coordinate pyruvate: Arg-45, Thr-69, and Lys-129. The active-site Schiff-base intermediate with substrate is the Lys-129.

It belongs to the KHG/KDPG aldolase family. In terms of assembly, homotrimer.

Its subcellular location is the cytoplasm. The catalysed reaction is 2-dehydro-3-deoxy-6-phospho-D-gluconate = D-glyceraldehyde 3-phosphate + pyruvate. The protein operates within carbohydrate acid metabolism; 2-dehydro-3-deoxy-D-gluconate degradation; D-glyceraldehyde 3-phosphate and pyruvate from 2-dehydro-3-deoxy-D-gluconate: step 2/2. In terms of biological role, catalyzes the reversible, stereospecific retro-aldol cleavage of 2-keto-3-deoxy-6-phosphogluconate (KDPG) to pyruvate and D-glyceraldehyde-3-phosphate. The chain is 2-dehydro-3-deoxy-phosphogluconate aldolase (eda) from Treponema pallidum (strain Nichols).